A 229-amino-acid polypeptide reads, in one-letter code: PKHD-type hydroxylase OCAR_6723/OCA5_c13470 (229 aa).

Positions 78–180 constitute a Fe2OG dioxygenase domain; it reads HIFPPLFNRY…RVASFFWLQS (103 aa). Fe cation is bound by residues histidine 98, aspartate 100, and histidine 161. Residue arginine 171 participates in 2-oxoglutarate binding.

It depends on Fe(2+) as a cofactor. Requires L-ascorbate as cofactor.

The protein is PKHD-type hydroxylase OCAR_6723/OCA5_c13470 of Afipia carboxidovorans (strain ATCC 49405 / DSM 1227 / KCTC 32145 / OM5) (Oligotropha carboxidovorans).